The following is a 175-amino-acid chain: Endoribonuclease YbeY (175 aa).

Positions 137, 141, and 147 each coordinate Zn(2+).

It belongs to the endoribonuclease YbeY family. The cofactor is Zn(2+).

Its subcellular location is the cytoplasm. Its function is as follows. Single strand-specific metallo-endoribonuclease involved in late-stage 70S ribosome quality control and in maturation of the 3' terminus of the 16S rRNA. This chain is Endoribonuclease YbeY, found in Burkholderia ambifaria (strain ATCC BAA-244 / DSM 16087 / CCUG 44356 / LMG 19182 / AMMD) (Burkholderia cepacia (strain AMMD)).